The primary structure comprises 467 residues: tRNA-2-methylthio-N(6)-dimethylallyladenosine synthase (467 aa).

The region spanning 15–135 (KKIFVKTYGC…LPEYVARLAN (121 aa)) is the MTTase N-terminal domain. Cysteine 24, cysteine 60, cysteine 98, cysteine 177, cysteine 181, and cysteine 184 together coordinate [4Fe-4S] cluster. The Radical SAM core domain maps to 163 to 395 (LARGATAFLT…QALLGEQQLA (233 aa)). Residues 398-461 (AGCAGRTMPV…RNSLRGRLRE (64 aa)) enclose the TRAM domain.

This sequence belongs to the methylthiotransferase family. MiaB subfamily. As to quaternary structure, monomer. Requires [4Fe-4S] cluster as cofactor.

The protein localises to the cytoplasm. It catalyses the reaction N(6)-dimethylallyladenosine(37) in tRNA + (sulfur carrier)-SH + AH2 + 2 S-adenosyl-L-methionine = 2-methylsulfanyl-N(6)-dimethylallyladenosine(37) in tRNA + (sulfur carrier)-H + 5'-deoxyadenosine + L-methionine + A + S-adenosyl-L-homocysteine + 2 H(+). Functionally, catalyzes the methylthiolation of N6-(dimethylallyl)adenosine (i(6)A), leading to the formation of 2-methylthio-N6-(dimethylallyl)adenosine (ms(2)i(6)A) at position 37 in tRNAs that read codons beginning with uridine. The polypeptide is tRNA-2-methylthio-N(6)-dimethylallyladenosine synthase (Parvibaculum lavamentivorans (strain DS-1 / DSM 13023 / NCIMB 13966)).